The primary structure comprises 141 residues: Galactose-6-phosphate isomerase subunit LacA 1 (141 aa).

It belongs to the LacAB/RpiB family. As to quaternary structure, heteromultimeric protein consisting of LacA and LacB.

It carries out the reaction aldehydo-D-galactose 6-phosphate = keto-D-tagatose 6-phosphate. It participates in carbohydrate metabolism; D-galactose 6-phosphate degradation; D-tagatose 6-phosphate from D-galactose 6-phosphate: step 1/1. The protein is Galactose-6-phosphate isomerase subunit LacA 1 of Streptococcus pyogenes serotype M18 (strain MGAS8232).